The chain runs to 390 residues: Bifunctional enzyme IspD/IspF (390 aa).

The segment at 1 to 229 (MAAGRGERAG…RQDHAVFPDI (229 aa)) is 2-C-methyl-D-erythritol 4-phosphate cytidylyltransferase. Residues 230–390 (RTGNGYDVHS…TVIYPGEVPE (161 aa)) form a 2-C-methyl-D-erythritol 2,4-cyclodiphosphate synthase region. Asp-236 and His-238 together coordinate a divalent metal cation. Residues 236-238 (DVH) and 262-263 (HS) contribute to the 4-CDP-2-C-methyl-D-erythritol 2-phosphate site. An a divalent metal cation-binding site is contributed by His-270. Residues 284 to 286 (DIG), 360 to 363 (TTNE), Phe-367, and Arg-370 each bind 4-CDP-2-C-methyl-D-erythritol 2-phosphate.

The protein in the N-terminal section; belongs to the IspD/TarI cytidylyltransferase family. IspD subfamily. In the C-terminal section; belongs to the IspF family. A divalent metal cation is required as a cofactor.

It catalyses the reaction 2-C-methyl-D-erythritol 4-phosphate + CTP + H(+) = 4-CDP-2-C-methyl-D-erythritol + diphosphate. It carries out the reaction 4-CDP-2-C-methyl-D-erythritol 2-phosphate = 2-C-methyl-D-erythritol 2,4-cyclic diphosphate + CMP. It functions in the pathway isoprenoid biosynthesis; isopentenyl diphosphate biosynthesis via DXP pathway; isopentenyl diphosphate from 1-deoxy-D-xylulose 5-phosphate: step 2/6. Its pathway is isoprenoid biosynthesis; isopentenyl diphosphate biosynthesis via DXP pathway; isopentenyl diphosphate from 1-deoxy-D-xylulose 5-phosphate: step 4/6. Functionally, bifunctional enzyme that catalyzes the formation of 4-diphosphocytidyl-2-C-methyl-D-erythritol from CTP and 2-C-methyl-D-erythritol 4-phosphate (MEP) (IspD), and catalyzes the conversion of 4-diphosphocytidyl-2-C-methyl-D-erythritol 2-phosphate (CDP-ME2P) to 2-C-methyl-D-erythritol 2,4-cyclodiphosphate (ME-CPP) with a corresponding release of cytidine 5-monophosphate (CMP) (IspF). The chain is Bifunctional enzyme IspD/IspF from Brucella suis biovar 1 (strain 1330).